A 196-amino-acid chain; its full sequence is MEELPSTAVGIRLQDGVILGAVRRLSYGGYVLSKSAKKVFPISRFGIGGAGLFGDLQALTRIMNANIKYYELYNNRPISTRAAAKLLSIILYQYKYMPFISEVLFGGVDNGEPQLYVLDPLGSLLDDIYAAVGSGARVAIGVLEAEYSEKLTLTQGRELTIKSLRASAERDVTSGDGIDILTISKDGKINTEFLSS.

Residues 1–6 constitute a propeptide, removed in mature form; by autocatalysis; the sequence is MEELPS. Threonine 7 (nucleophile) is an active-site residue.

This sequence belongs to the peptidase T1B family. The 20S proteasome core is composed of 14 alpha and 14 beta subunits that assemble into four stacked heptameric rings, resulting in a barrel-shaped structure. The two inner rings, each composed of seven catalytic beta subunits, are sandwiched by two outer rings, each composed of seven alpha subunits. The catalytic chamber with the active sites is on the inside of the barrel. Has a gated structure, the ends of the cylinder being occluded by the N-termini of the alpha-subunits. Is capped at one or both ends by the proteasome regulatory ATPase, PAN.

The protein resides in the cytoplasm. It carries out the reaction Cleavage of peptide bonds with very broad specificity.. The formation of the proteasomal ATPase PAN-20S proteasome complex, via the docking of the C-termini of PAN into the intersubunit pockets in the alpha-rings, triggers opening of the gate for substrate entry. Interconversion between the open-gate and close-gate conformations leads to a dynamic regulation of the 20S proteasome proteolysis activity. In terms of biological role, component of the proteasome core, a large protease complex with broad specificity involved in protein degradation. The sequence is that of Proteasome subunit beta 2 from Metallosphaera sedula (strain ATCC 51363 / DSM 5348 / JCM 9185 / NBRC 15509 / TH2).